The following is an 856-amino-acid chain: uncharacterized protein (856 aa).

This is an uncharacterized protein from Rickettsia felis (strain ATCC VR-1525 / URRWXCal2) (Rickettsia azadi).